We begin with the raw amino-acid sequence, 162 residues long: Nitrogen regulatory protein (162 aa).

The PTS EIIA type-2 domain occupies 12 to 156 (NVLNQECTRS…EELYEIITEA (145 aa)). Histidine 73 functions as the Tele-phosphohistidine intermediate in the catalytic mechanism.

It localises to the cytoplasm. In terms of biological role, seems to have a role in regulating nitrogen assimilation. The polypeptide is Nitrogen regulatory protein (ptsN) (Klebsiella oxytoca).